The sequence spans 88 residues: Small ribosomal subunit protein uS15 (88 aa).

Belongs to the universal ribosomal protein uS15 family. Part of the 30S ribosomal subunit. Forms a bridge to the 50S subunit in the 70S ribosome, contacting the 23S rRNA.

Its function is as follows. One of the primary rRNA binding proteins, it binds directly to 16S rRNA where it helps nucleate assembly of the platform of the 30S subunit by binding and bridging several RNA helices of the 16S rRNA. Forms an intersubunit bridge (bridge B4) with the 23S rRNA of the 50S subunit in the ribosome. This Verminephrobacter eiseniae (strain EF01-2) protein is Small ribosomal subunit protein uS15.